A 396-amino-acid chain; its full sequence is Alanine racemase (396 aa).

Lys46 functions as the Proton acceptor; specific for D-alanine in the catalytic mechanism. Lys46 is subject to N6-(pyridoxal phosphate)lysine. Arg145 provides a ligand contact to substrate. The active-site Proton acceptor; specific for L-alanine is the Tyr280. Residue Met328 coordinates substrate.

Belongs to the alanine racemase family. Requires pyridoxal 5'-phosphate as cofactor.

It carries out the reaction L-alanine = D-alanine. It functions in the pathway amino-acid biosynthesis; D-alanine biosynthesis; D-alanine from L-alanine: step 1/1. Catalyzes the interconversion of L-alanine and D-alanine. May also act on other amino acids. This is Alanine racemase (alr) from Brucella suis (strain ATCC 23445 / NCTC 10510).